The chain runs to 149 residues: MKKNINVLLINGPNLNLLGDREKNIYGDKTLSCLINDLKKRSEILNISLNDIQSNAEHVIIEKIHSAKKEKIDYIIINPAAFTHTSIAIRDALIAVTIPFIEVHISNIYARENFRSHSWLSDISKGVITGLGLDGYFWALETISKRCCV.

The Proton acceptor role is filled by tyrosine 26. Residues asparagine 78, histidine 84, and aspartate 91 each contribute to the substrate site. Residue histidine 104 is the Proton donor of the active site. Substrate is bound by residues 105 to 106 and arginine 115; that span reads IS.

Belongs to the type-II 3-dehydroquinase family. In terms of assembly, homododecamer.

The catalysed reaction is 3-dehydroquinate = 3-dehydroshikimate + H2O. It participates in metabolic intermediate biosynthesis; chorismate biosynthesis; chorismate from D-erythrose 4-phosphate and phosphoenolpyruvate: step 3/7. Its function is as follows. Catalyzes a trans-dehydration via an enolate intermediate. This Buchnera aphidicola subsp. Schizaphis graminum (strain Sg) protein is 3-dehydroquinate dehydratase (aroQ).